Here is a 260-residue protein sequence, read N- to C-terminus: 2-amino-3,7-dideoxy-D-threo-hept-6-ulosonate synthase 1 (260 aa).

The active-site Proton acceptor is aspartate 26. Residues 26-30 (DHGIT) and 144-146 (YPR) contribute to the 1-deoxy-D-threo-hexo-2,5-diulose 6-phosphate site. The active-site Proton donor is the tyrosine 144. The Schiff-base intermediate with substrate role is filled by lysine 172. 1-deoxy-D-threo-hexo-2,5-diulose 6-phosphate contacts are provided by residues 194 to 195 (GG) and 221 to 222 (GR).

It belongs to the DeoC/FbaB aldolase family. ADHS subfamily. Homodecamer.

It carries out the reaction 1-deoxy-D-threo-hexo-2,5-diulose 6-phosphate + L-aspartate 4-semialdehyde = 2,3-dioxopropyl phosphate + 2-amino-2,3,7-trideoxy-D-lyxo-hept-6-ulosonate. In terms of biological role, catalyzes a transaldol reaction between 6-deoxy-5-ketofructose 1-phosphate (DKFP) and L-aspartate semialdehyde (ASA) with an elimination of hydroxypyruvaldehyde phosphate to yield 2-amino-3,7-dideoxy-D-threo-hept-6-ulosonate (ADH). Plays a key role in an alternative pathway of the biosynthesis of 3-dehydroquinate (DHQ), which is involved in the canonical pathway for the biosynthesis of aromatic amino acids. This chain is 2-amino-3,7-dideoxy-D-threo-hept-6-ulosonate synthase 1, found in Archaeoglobus fulgidus (strain ATCC 49558 / DSM 4304 / JCM 9628 / NBRC 100126 / VC-16).